The following is a 705-amino-acid chain: SPbeta prophage-derived sublancin-168-processing and transport ATP-binding protein SunT (705 aa).

In terms of domain architecture, Peptidase C39 spans 12-138 (QFNSHDCGLA…SKFTNFILEI (127 aa)). C18 is an active-site residue. 6 helical membrane passes run 167-187 (IVFV…AGSF), 205-225 (LITI…FDFV), 281-301 (ANFV…VILY), 306-326 (ILFL…ILFF), 388-408 (VISN…IILW), and 418-438 (SMSL…LSSL). Positions 168–450 (VFVILLTSLF…ILSMQSDLQQ (283 aa)) constitute an ABC transmembrane type-1 domain. The 223-residue stretch at 483 to 705 (IKTVNLNIGA…SYSENKEYSI (223 aa)) folds into the ABC transporter domain. 516–523 (GESGTGKS) contributes to the ATP binding site.

This sequence belongs to the ABC transporter superfamily. SunT family. As to quaternary structure, homodimer.

The protein localises to the cell membrane. In terms of biological role, sunT (TC 3.A.1.112.4) is required for production of the lantibiotic sublancin-168, probably by both processing the signal peptide and exporting the resulting mature lantibiotic. This Bacillus subtilis (strain 168) protein is SPbeta prophage-derived sublancin-168-processing and transport ATP-binding protein SunT (sunT).